The chain runs to 510 residues: Maturase K (510 aa).

Belongs to the intron maturase 2 family. MatK subfamily.

Its subcellular location is the plastid. The protein resides in the chloroplast. Its function is as follows. Usually encoded in the trnK tRNA gene intron. Probably assists in splicing its own and other chloroplast group II introns. The chain is Maturase K from Penstemon heterophyllus (Foothill penstemon).